The following is a 125-amino-acid chain: Small ribosomal subunit protein uS12c (125 aa).

The protein belongs to the universal ribosomal protein uS12 family. In terms of assembly, part of the 30S ribosomal subunit.

It is found in the plastid. Its subcellular location is the chloroplast. Its function is as follows. With S4 and S5 plays an important role in translational accuracy. Located at the interface of the 30S and 50S subunits. The polypeptide is Small ribosomal subunit protein uS12c (rps12) (Tupiella akineta (Green alga)).